The following is a 592-amino-acid chain: Ferric-chelate reductase 1 (592 aa).

Residues 2–22 (AVSGFTLGTCILLLHISYVAN) form a helical membrane-spanning segment. The Reelin domain maps to 13–179 (LLLHISYVAN…FTTPKATVVP (167 aa)). N-linked (GlcNAc...) asparagine glycosylation is found at Asn-138, Asn-308, and Asn-321. Residues 216 to 331 (EASCVFLSFT…TSYYIFLADG (116 aa)) form the DOMON domain. The region spanning 335 to 534 (DGRIYKHSQQ…VGTEVVLEVH (200 aa)) is the Cytochrome b561 domain. The helical transmembrane segment at 372-392 (VHGALMFVAWMTTVSIGVLVA) threads the bilayer. Heme b contacts are provided by His-373 and His-414. 2 helical membrane passes run 415 to 435 (RMLM…PFIY) and 446 to 466 (HPYL…LAVF). Heme b contacts are provided by His-446 and His-482. Helical transmembrane passes span 491 to 511 (IIAV…LPDS), 515 to 535 (YAMT…EVHA), and 569 to 589 (AVLA…LSAI).

The protein belongs to the FRRS1 family. It depends on heme b as a cofactor.

The protein localises to the membrane. Ferric-chelate reductases reduce Fe(3+) to Fe(2+) before its transport from the endosome to the cytoplasm. This is Ferric-chelate reductase 1 (FRRS1) from Homo sapiens (Human).